We begin with the raw amino-acid sequence, 256 residues long: Peroxisomal membrane protein PMP30B (256 aa).

It belongs to the peroxin-11 family.

The protein localises to the peroxisome membrane. Involved in peroxisomal proliferation. Could participate in peroxisomal elongation or fission. May be involved in parceling of peroxisomes into regular quanta. This is Peroxisomal membrane protein PMP30B (PEX11B) from Candida boidinii (Yeast).